The following is a 316-amino-acid chain: Methionyl-tRNA formyltransferase (316 aa).

113 to 116 (SLLP) is a binding site for (6S)-5,6,7,8-tetrahydrofolate.

This sequence belongs to the Fmt family.

The catalysed reaction is L-methionyl-tRNA(fMet) + (6R)-10-formyltetrahydrofolate = N-formyl-L-methionyl-tRNA(fMet) + (6S)-5,6,7,8-tetrahydrofolate + H(+). In terms of biological role, attaches a formyl group to the free amino group of methionyl-tRNA(fMet). The formyl group appears to play a dual role in the initiator identity of N-formylmethionyl-tRNA by promoting its recognition by IF2 and preventing the misappropriation of this tRNA by the elongation apparatus. In Proteus mirabilis (strain HI4320), this protein is Methionyl-tRNA formyltransferase.